The chain runs to 195 residues: Protein GrpE (195 aa).

Polar residues predominate over residues 1 to 24 (MSSKEQNTPDEQVSQESEMEQGQQ). Residues 1-40 (MSSKEQNTPDEQVSQESEMEQGQQAEAAPETVDVVDPRDE) form a disordered region.

The protein belongs to the GrpE family. As to quaternary structure, homodimer.

Its subcellular location is the cytoplasm. In terms of biological role, participates actively in the response to hyperosmotic and heat shock by preventing the aggregation of stress-denatured proteins, in association with DnaK and GrpE. It is the nucleotide exchange factor for DnaK and may function as a thermosensor. Unfolded proteins bind initially to DnaJ; upon interaction with the DnaJ-bound protein, DnaK hydrolyzes its bound ATP, resulting in the formation of a stable complex. GrpE releases ADP from DnaK; ATP binding to DnaK triggers the release of the substrate protein, thus completing the reaction cycle. Several rounds of ATP-dependent interactions between DnaJ, DnaK and GrpE are required for fully efficient folding. The polypeptide is Protein GrpE (Sodalis glossinidius (strain morsitans)).